The chain runs to 581 residues: Major facilitator superfamily multidrug transporter NAG4 (581 aa).

The segment covering 1–14 (MSHATDSTLDNASV) has biased composition (polar residues). Residues 1–43 (MSHATDSTLDNASVDSEKVRDFGDDLQNHPVQPTRSILSKIRS) are disordered. A glycan (N-linked (GlcNAc...) asparagine) is linked at asparagine 11. A compositionally biased stretch (basic and acidic residues) spans 15–27 (DSEKVRDFGDDLQ). N-linked (GlcNAc...) asparagine glycosylation occurs at asparagine 125. The next 12 helical transmembrane spans lie at 132-152 (WLYTLVLGAVCFVVALGSAIV), 169-189 (VIILASVTVFVIGFGVGPLVF), 199-219 (KPIYVVTLFIAVVFIVPCGAA), 230-250 (LIDGIAFSAPMTLIGGSLADI), 261-281 (AIFSAAPFLGPVCGPIFGGLL), 290-310 (WIYWTFLIVAGVFYAIFIAIV), 365-385 (IVFLMTIYMAICYGLLYMFFF), 403-423 (GVMFIPIGVGVIIATIAAPFF), 447-467 (LIPMMIACWFVPVGLFAFAWS), 471-491 (WVSWAGPCFSGLAAGFGFCCL), 510-530 (ALAAKTFVRSIWGACVPLFTI), and 544-564 (LMAFISLACCAIPYLFFFFGA).

It belongs to the major facilitator superfamily. DHA1 family. Polyamines/proton antiporter (TC 2.A.1.2.16) subfamily.

The protein resides in the cell membrane. Functionally, MFS transporter involved in N-acetylglucosamine (GlcNAc) uptake. Confers resistance to cycloheximide, 4-nitroquinoline-N-oxide, and 1,10-phenanthroline, and contributes to virulence. The polypeptide is Major facilitator superfamily multidrug transporter NAG4 (Candida albicans (strain SC5314 / ATCC MYA-2876) (Yeast)).